The primary structure comprises 145 residues: D-aminoacyl-tRNA deacylase (145 aa).

Positions 137 to 138 (GP) match the Gly-cisPro motif, important for rejection of L-amino acids motif.

It belongs to the DTD family. In terms of assembly, homodimer.

The protein localises to the cytoplasm. It carries out the reaction glycyl-tRNA(Ala) + H2O = tRNA(Ala) + glycine + H(+). The catalysed reaction is a D-aminoacyl-tRNA + H2O = a tRNA + a D-alpha-amino acid + H(+). In terms of biological role, an aminoacyl-tRNA editing enzyme that deacylates mischarged D-aminoacyl-tRNAs. Also deacylates mischarged glycyl-tRNA(Ala), protecting cells against glycine mischarging by AlaRS. Acts via tRNA-based rather than protein-based catalysis; rejects L-amino acids rather than detecting D-amino acids in the active site. By recycling D-aminoacyl-tRNA to D-amino acids and free tRNA molecules, this enzyme counteracts the toxicity associated with the formation of D-aminoacyl-tRNA entities in vivo and helps enforce protein L-homochirality. The chain is D-aminoacyl-tRNA deacylase from Shewanella baltica (strain OS155 / ATCC BAA-1091).